We begin with the raw amino-acid sequence, 63 residues long: UPF0370 protein ECA1289 (63 aa).

A helical membrane pass occupies residues 3 to 23; that stretch reads WLADYWWIILIILIGMLINGI. A disordered region spans residues 39 to 63; that stretch reads PKLPPHRDNNDKWDNEEDDWPKKKP.

The protein belongs to the UPF0370 family.

It is found in the cell membrane. The protein is UPF0370 protein ECA1289 of Pectobacterium atrosepticum (strain SCRI 1043 / ATCC BAA-672) (Erwinia carotovora subsp. atroseptica).